The chain runs to 360 residues: S-adenosylmethionine:tRNA ribosyltransferase-isomerase (360 aa).

It belongs to the QueA family. As to quaternary structure, monomer.

The protein resides in the cytoplasm. The enzyme catalyses 7-aminomethyl-7-carbaguanosine(34) in tRNA + S-adenosyl-L-methionine = epoxyqueuosine(34) in tRNA + adenine + L-methionine + 2 H(+). The protein operates within tRNA modification; tRNA-queuosine biosynthesis. Its function is as follows. Transfers and isomerizes the ribose moiety from AdoMet to the 7-aminomethyl group of 7-deazaguanine (preQ1-tRNA) to give epoxyqueuosine (oQ-tRNA). This chain is S-adenosylmethionine:tRNA ribosyltransferase-isomerase, found in Rhodopseudomonas palustris (strain TIE-1).